The chain runs to 187 residues: Dihydrofolate reductase type A10 (187 aa).

Positions 2-174 (NISLIFANEL…YSLSIDKFVR (173 aa)) constitute a DHFR domain.

It belongs to the dihydrofolate reductase family. As to quaternary structure, homodimer.

The catalysed reaction is (6S)-5,6,7,8-tetrahydrofolate + NADP(+) = 7,8-dihydrofolate + NADPH + H(+). It functions in the pathway cofactor biosynthesis; tetrahydrofolate biosynthesis; 5,6,7,8-tetrahydrofolate from 7,8-dihydrofolate: step 1/1. In terms of biological role, key enzyme in folate metabolism. Catalyzes an essential reaction for de novo glycine and purine synthesis, and for DNA precursor synthesis. The polypeptide is Dihydrofolate reductase type A10 (dfrA10) (Escherichia coli).